A 180-amino-acid chain; its full sequence is MSNGIVAKRYAVALFKIAKEKHVLEMFEEELRLVQNVYVKNGELHSFLTQPNISKEQKKTFLANVFGSVSESILNTLYILIDNKRIDILPEIADEYVVLANEERNVADATVYSIRLLSEEEKLNIAEAFAKRTGKDAIRVKNVVDEDLLGGIKVRIGNRIYDGSLQGKLARIQRELMKNR.

It belongs to the ATPase delta chain family. As to quaternary structure, F-type ATPases have 2 components, F(1) - the catalytic core - and F(0) - the membrane proton channel. F(1) has five subunits: alpha(3), beta(3), gamma(1), delta(1), epsilon(1). F(0) has three main subunits: a(1), b(2) and c(10-14). The alpha and beta chains form an alternating ring which encloses part of the gamma chain. F(1) is attached to F(0) by a central stalk formed by the gamma and epsilon chains, while a peripheral stalk is formed by the delta and b chains.

The protein resides in the cell membrane. In terms of biological role, f(1)F(0) ATP synthase produces ATP from ADP in the presence of a proton or sodium gradient. F-type ATPases consist of two structural domains, F(1) containing the extramembraneous catalytic core and F(0) containing the membrane proton channel, linked together by a central stalk and a peripheral stalk. During catalysis, ATP synthesis in the catalytic domain of F(1) is coupled via a rotary mechanism of the central stalk subunits to proton translocation. Functionally, this protein is part of the stalk that links CF(0) to CF(1). It either transmits conformational changes from CF(0) to CF(1) or is implicated in proton conduction. The protein is ATP synthase subunit delta of Bacillus cereus (strain G9842).